A 206-amino-acid chain; its full sequence is Ras-related protein Rab-7b (206 aa).

Position 15-22 (15-22 (GDSGVGKT)) interacts with GTP. Phosphoserine occurs at positions 17 and 23. T34, T40, and T64 each carry phosphothreonine. GTP contacts are provided by residues 34-40 (TQQYRAT) and 63-67 (DTAGQ). The Effector region signature appears at 37 to 45 (YRATVGADF). S72 bears the Phosphoserine mark. Phosphotyrosine is present on residues Y78 and Y88. GTP-binding positions include 125–128 (NKLD) and 157–158 (AK). S-geranylgeranyl cysteine attachment occurs at residues C205 and C206.

Belongs to the small GTPase superfamily. Rab family. Post-translationally, glycosylated.

Its subcellular location is the cytoplasm. The protein localises to the cytoskeleton. This Paramecium octaurelia protein is Ras-related protein Rab-7b.